The following is a 168-amino-acid chain: GTP-dependent dephospho-CoA kinase (168 aa).

Aspartate 40, valine 41, valine 42, aspartate 59, and glutamate 112 together coordinate GTP.

It belongs to the GTP-dependent DPCK family.

It carries out the reaction 3'-dephospho-CoA + GTP = GDP + CoA + H(+). It functions in the pathway cofactor biosynthesis; coenzyme A biosynthesis. Its function is as follows. Catalyzes the GTP-dependent phosphorylation of the 3'-hydroxyl group of dephosphocoenzyme A to form coenzyme A (CoA). The chain is GTP-dependent dephospho-CoA kinase from Methanoregula boonei (strain DSM 21154 / JCM 14090 / 6A8).